Consider the following 407-residue polypeptide: Probable NADPH dehydrogenase (407 aa).

Residues threonine 49 and glutamine 124 each contribute to the FMN site. 201–204 lines the substrate pocket; the sequence is HGAH. The active-site Proton donor is the tyrosine 206. Positions 254 and 357 each coordinate FMN.

It belongs to the NADH:flavin oxidoreductase/NADH oxidase family. It depends on FMN as a cofactor.

The enzyme catalyses A + NADPH + H(+) = AH2 + NADP(+). Functionally, oxidoreductase that binds mammalian estrogens with high affinity. The chain is Probable NADPH dehydrogenase from Candida albicans (Yeast).